The chain runs to 177 residues: Transmembrane protein 196 (177 aa).

The next 4 helical transmembrane spans lie at 11–31 (LLVL…VGAV), 47–67 (SSPV…IFCA), 73–93 (LIMI…ILNI), and 106–126 (LYSL…GCTI). Positions 152–162 (HSHEMTEKDTE) are enriched in basic and acidic residues. The disordered stretch occupies residues 152 to 177 (HSHEMTEKDTENITNGGGPLALNGRV).

It is found in the cytoplasm. It localises to the membrane. This is Transmembrane protein 196 (tmem196) from Xenopus tropicalis (Western clawed frog).